A 498-amino-acid chain; its full sequence is ATP synthase subunit beta, chloroplastic (498 aa).

172–179 (GGAGVGKT) is an ATP binding site.

Belongs to the ATPase alpha/beta chains family. In terms of assembly, F-type ATPases have 2 components, CF(1) - the catalytic core - and CF(0) - the membrane proton channel. CF(1) has five subunits: alpha(3), beta(3), gamma(1), delta(1), epsilon(1). CF(0) has four main subunits: a(1), b(1), b'(1) and c(9-12).

It is found in the plastid. It localises to the chloroplast thylakoid membrane. The catalysed reaction is ATP + H2O + 4 H(+)(in) = ADP + phosphate + 5 H(+)(out). Functionally, produces ATP from ADP in the presence of a proton gradient across the membrane. The catalytic sites are hosted primarily by the beta subunits. This is ATP synthase subunit beta, chloroplastic from Salacca zalacca (Snake palm).